The chain runs to 499 residues: Glutelin type-B 1 (499 aa).

The first 24 residues, 1-24, serve as a signal peptide directing secretion; the sequence is MASSVFSRFSIYFCVLLLCHGSMA. Intrachain disulfides connect cysteine 45-cysteine 78 and cysteine 121-cysteine 309. Cupin type-1 domains follow at residues 50–247 and 315–464; these read LQAF…VAAK and VNIE…EQAR. The tract at residues 467–499 is disordered; sequence KNNRGEEHGAFTPRFQQQYYPGLSNESESETSE.

This sequence belongs to the 11S seed storage protein (globulins) family. Hexamer; each subunit is composed of an acidic and a basic chain derived from a single precursor and linked by a disulfide bond.

Seed storage protein. This is Glutelin type-B 1 (GluB1-A) from Oryza sativa subsp. japonica (Rice).